The sequence spans 186 residues: ATP-dependent protease subunit HslV (186 aa).

Thr13 is a catalytic residue. Residues Ala167, Cys170, and Thr173 each contribute to the Na(+) site.

It belongs to the peptidase T1B family. HslV subfamily. As to quaternary structure, a double ring-shaped homohexamer of HslV is capped on each side by a ring-shaped HslU homohexamer. The assembly of the HslU/HslV complex is dependent on binding of ATP.

It localises to the cytoplasm. The catalysed reaction is ATP-dependent cleavage of peptide bonds with broad specificity.. With respect to regulation, allosterically activated by HslU binding. In terms of biological role, protease subunit of a proteasome-like degradation complex believed to be a general protein degrading machinery. This is ATP-dependent protease subunit HslV from Allorhizobium ampelinum (strain ATCC BAA-846 / DSM 112012 / S4) (Agrobacterium vitis (strain S4)).